The chain runs to 2496 residues: Non-reducing polyketide synthase adrD (2496 aa).

The N-terminal acylcarrier protein transacylase domain (SAT) stretch occupies residues 15-254 (LVFGPQIAEI…HHASHITAVQ (240 aa)). A Ketosynthase family 3 (KS3) domain is found at 387-808 (ATPIAITGMG…GSNAALVVKQ (422 aa)). Residues C552, H687, and H726 each act as for beta-ketoacyl synthase activity in the active site. The malonyl-CoA:ACP transacylase (MAT) domain stretch occupies residues 914–1223 (LCFGGQNGNE…QSLDLGGPQG (310 aa)). Residue S1001 is the For acyl/malonyl transferase activity of the active site. The N-terminal hotdog fold stretch occupies residues 1295–1423 (KEFVQLLTKQ…GEISLHPFGQ (129 aa)). A PKS/mFAS DH domain is found at 1295 to 1602 (KEFVQLLTKQ…FTSVSIAGLA (308 aa)). Residues 1296-1601 (EFVQLLTKQP…EFTSVSIAGL (306 aa)) are product template (PT) domain. H1326 (proton acceptor; for dehydratase activity) is an active-site residue. Residues 1451 to 1602 (ESSGLKGFAV…FTSVSIAGLA (152 aa)) are C-terminal hotdog fold. The active-site Proton donor; for dehydratase activity is the D1509. Residues 1615–1629 (EKASPDLSLRNDSKV) are compositionally biased toward basic and acidic residues. A disordered region spans residues 1615–1645 (EKASPDLSLRNDSKVDVNPTPQNTAPVVQPT). A compositionally biased stretch (polar residues) spans 1633-1645 (PTPQNTAPVVQPT). Residues 1652-1726 (PGYFVVVQEM…ALVQTIFPDA (75 aa)) enclose the Carrier domain. An O-(pantetheine 4'-phosphoryl)serine modification is found at S1686. Positions 1888–2121 (QHRSEHHLLK…GFQWVDWTHN (234 aa)) are methyltransferase (CMeT) domain. Residues 2151-2496 (RVMNEETVPY…YEFLRDHVRY (346 aa)) form a thioesterase (TE) domain region. Residues S2274 and D2433 each act as for thioesterase activity in the active site.

The enzyme catalyses 3 malonyl-CoA + acetyl-CoA + 2 S-adenosyl-L-methionine = 3,5-dimethylorsellinate + 2 S-adenosyl-L-homocysteine + 3 CO2 + 4 CoA. It functions in the pathway secondary metabolite biosynthesis; terpenoid biosynthesis. In terms of biological role, non-reducing polyketide synthase; part of the gene cluster that mediates the biosynthesis of andrastins, meroterpenoid compounds that exhibit inhibitory activity against ras farnesyltransferase, suggesting that they could be promising leads for antitumor agents. The first step of the pathway is the synthesis of 3,5-dimethylorsellinic acid (DMOA) by the polyketide synthase adrD via condensation of one acetyl-CoA starter unit with 3 malonyl-CoA units and 2 methylations. DMAO is then converted to farnesyl-DMAO by the prenyltransferase adrG. The methyltransferase adrK catalyzes the methylation of the carboxyl group of farnesyl-DMAO to farnesyl-DMAO methyl ester which is further converted to epoxyfarnesyl-DMAO methyl ester by the FAD-dependent monooxygenase adrH. The terpene cyclase adrI then catalyzes the carbon skeletal rearrangement to generate the andrastin E, the first compound in the pathway having the andrastin scaffold, with the tetracyclic ring system. The post-cyclization tailoring enzymes adrF, adrE, adrJ, and adrA, are involved in the conversion of andrastin E into andrastin A. The short chain dehydrogenase adrF is responsible for the oxidation of the C-3 a hydroxyl group of andrastin E to yield the corresponding ketone, andrastin D. The ketoreductase adrE stereoselectively reduces the carbonyl moiety to reverse the stereochemistry of the C-3 position to yield andrastin F. The acetyltransferase adrJ is the acetyltransferase that attaches the acetyl group to the C-3 hydroxyl group of andrastin F to yield andrastin C. Finally, the cytochrome P450 monooxygenase adrA catalyzes two sequential oxidation reactions of the C-23 methyl group, to generate the corresponding alcohol andrastin B, and aldehyde andrastin A. This Penicillium rubens (strain ATCC 28089 / DSM 1075 / NRRL 1951 / Wisconsin 54-1255) (Penicillium chrysogenum) protein is Non-reducing polyketide synthase adrD.